A 1010-amino-acid chain; its full sequence is DENN domain-containing protein 1A (1010 aa).

In terms of domain architecture, uDENN spans 13-143 (FEVYIEVNRP…HGHPIPEPGT (131 aa)). Residues 160-296 (ELPSIPENRN…VVSALKNRIR (137 aa)) enclose the cDENN domain. Residues 298–375 (MSTTTGDGVA…DGRLDLLNSG (78 aa)) form the dDENN domain. The FXDXF motif signature appears at 378–382 (FSDVF). Positions 455 to 554 (GFSTATEEPL…EATVKEPQST (100 aa)) are disordered. Residues 472-482 (IEKKRGEERRP) show a composition bias toward basic and acidic residues. Residues 493–502 (PRPHVPRRPK) show a composition bias toward basic residues. Residues 509–524 (SRTTAGSSPDQPQQYR) are compositionally biased toward polar residues. Residues 538 to 548 (SPEKDSSEATV) are compositionally biased toward basic and acidic residues. A Clathrin box motif is present at residues 560–569 (SLLEDIFSNL).

The protein localises to the cytoplasmic vesicle. The protein resides in the clathrin-coated vesicle membrane. It localises to the presynaptic cell membrane. Guanine nucleotide exchange factor (GEF) regulating clathrin-mediated endocytosis through RAB35 activation. Promotes the exchange of GDP to GTP, converting inactive GDP-bound RAB35 into its active GTP-bound form. Regulates clathrin-mediated endocytosis of synaptic vesicles and mediates exit from early endosomes. Binds phosphatidylinositol-phosphates (PtdInsPs), with some preference for PtdIns(3)P. This chain is DENN domain-containing protein 1A (dennd1a), found in Xenopus laevis (African clawed frog).